The chain runs to 187 residues: Adenylate kinase (187 aa).

Position 11 to 16 (11 to 16 (GAGKGT)) interacts with ATP. The NMP stretch occupies residues 31–60 (STGDILREAVKNQTAMGIEAKRYMDAGDLV). Residues T32, R37, 58 to 60 (DLV), 86 to 89 (GFPR), and Q93 each bind AMP. The interval 127-137 (GRAEIEGRADD) is LID. ATP is bound at residue R128. AMP contacts are provided by R134 and R145. G173 lines the ATP pocket.

Belongs to the adenylate kinase family. In terms of assembly, monomer.

The protein localises to the cytoplasm. It catalyses the reaction AMP + ATP = 2 ADP. It participates in purine metabolism; AMP biosynthesis via salvage pathway; AMP from ADP: step 1/1. Functionally, catalyzes the reversible transfer of the terminal phosphate group between ATP and AMP. Plays an important role in cellular energy homeostasis and in adenine nucleotide metabolism. This is Adenylate kinase from Leptospira interrogans serogroup Icterohaemorrhagiae serovar copenhageni (strain Fiocruz L1-130).